Consider the following 138-residue polypeptide: Large ribosomal subunit protein uL16 (138 aa).

This sequence belongs to the universal ribosomal protein uL16 family. Part of the 50S ribosomal subunit.

Functionally, binds 23S rRNA and is also seen to make contacts with the A and possibly P site tRNAs. This Anaeromyxobacter dehalogenans (strain 2CP-C) protein is Large ribosomal subunit protein uL16.